Reading from the N-terminus, the 140-residue chain is 3-hydroxyacyl-[acyl-carrier-protein] dehydratase FabZ (140 aa).

Residue histidine 47 is part of the active site.

It belongs to the thioester dehydratase family. FabZ subfamily.

It is found in the cytoplasm. It catalyses the reaction a (3R)-hydroxyacyl-[ACP] = a (2E)-enoyl-[ACP] + H2O. Functionally, involved in unsaturated fatty acids biosynthesis. Catalyzes the dehydration of short chain beta-hydroxyacyl-ACPs and long chain saturated and unsaturated beta-hydroxyacyl-ACPs. In Streptococcus pneumoniae serotype 4 (strain ATCC BAA-334 / TIGR4), this protein is 3-hydroxyacyl-[acyl-carrier-protein] dehydratase FabZ.